Here is a 154-residue protein sequence, read N- to C-terminus: 3-hydroxyacyl-[acyl-carrier-protein] dehydratase FabZ (154 aa).

Histidine 54 is a catalytic residue.

This sequence belongs to the thioester dehydratase family. FabZ subfamily.

The protein resides in the cytoplasm. The enzyme catalyses a (3R)-hydroxyacyl-[ACP] = a (2E)-enoyl-[ACP] + H2O. Its function is as follows. Involved in unsaturated fatty acids biosynthesis. Catalyzes the dehydration of short chain beta-hydroxyacyl-ACPs and long chain saturated and unsaturated beta-hydroxyacyl-ACPs. This Shewanella baltica (strain OS223) protein is 3-hydroxyacyl-[acyl-carrier-protein] dehydratase FabZ.